A 96-amino-acid chain; its full sequence is Conotoxin Mr15.1 (96 aa).

The signal sequence occupies residues 1 to 20 (MSTLKMMLLILLLLLPLATF). The propeptide occupies 21 to 57 (DSDGQAIPGGGIPSAVNSRVGRLLGGDEKSGRSLEKR).

It belongs to the conotoxin N superfamily. Contains 4 disulfide bonds. Expressed by the venom duct.

It is found in the secreted. This is Conotoxin Mr15.1 from Conus marmoreus (Marble cone).